The sequence spans 826 residues: Lethal(3)malignant brain tumor-like protein 1 (826 aa).

Phosphoserine is present on Ser136. Disordered regions lie at residues 167-197 (LEPPVDASSCKCQACGPQQSSGLDVGSSGDR) and 220-271 (LLKP…RSQL). A compositionally biased stretch (basic and acidic residues) spans 242–256 (EAVKQGEGKDAEREP). 3 MBT repeats span residues 280–380 (WSWE…LQLP), 388–487 (FSWS…LTPP), and 496–591 (FCWE…LEPP). The interval 453 to 460 (FDDWGDTY) is interaction with monomethylated and dimethylated peptides. Residues 586-621 (HPLEPPLRPRESSSVSPGGCPPLSHRSPPHTKTSKY) form a disordered region. Over residues 612–621 (SPPHTKTSKY) the composition is skewed to basic residues. A CCHHC-type zinc finger spans residues 619–662 (SKYNFHHRKCPTPGCDGSGHVTGKFTAHHCLSGCPLAEKNQSRL). Cys628, Cys633, His646, and Cys652 together coordinate Zn(2+). The segment at 663 to 699 (KAELSDSETAARKKNPSNLSPRKKPRHQGRIGRPPKY) is disordered. A compositionally biased stretch (basic residues) spans 683-699 (PRKKPRHQGRIGRPPKY). Residues 757–821 (WTIEEVFGFV…YNAILMFKNT (65 aa)) form the SAM domain.

As to quaternary structure, homodimer. Interacts with RB1/RB (when monomethylated at 'Lys-860'). Interacts with p53/TP53 (when monomethylated at 'Lys-382'). Interacts with CBX3, ETV6, KMT5A and VCP/p97. Post-translationally, ubiquitinated in a VCP/p97-dependent way following DNA damage, leading to its removal from DNA damage sites, promoting accessibility of H4K20me2 mark for DNA repair protein TP53BP1, which is then recruited to DNA damage sites. Highly expressed in brain, testis, eyes, and ES cells.

Its subcellular location is the nucleus. In terms of biological role, polycomb group (PcG) protein that specifically recognizes and binds mono- and dimethyllysine residues on target proteins, thereby acting as a 'reader' of a network of post-translational modifications. PcG proteins maintain the transcriptionally repressive state of genes: acts as a chromatin compaction factor by recognizing and binding mono- and dimethylated histone H1b/H1-4 at 'Lys-26' (H1bK26me1 and H1bK26me2) and histone H4 at 'Lys-20' (H4K20me1 and H4K20me2), leading to condense chromatin and repress transcription. Recognizes and binds p53/TP53 monomethylated at 'Lys-382', leading to repress p53/TP53-target genes. Also recognizes and binds RB1/RB monomethylated at 'Lys-860'. Participates in the ETV6-mediated repression. Probably plays a role in cell proliferation. Overexpression induces multinucleated cells, suggesting that it is required to accomplish normal mitosis. This Mus musculus (Mouse) protein is Lethal(3)malignant brain tumor-like protein 1 (L3mbtl1).